The following is a 265-amino-acid chain: MFHNCRMEGSCNAETTSHVTAVVRAPIFCNCFALCLEIPILWDDLLYRHEKLLFGGFTCNGGAELILNSHCCLADAQMWQVHCHCSDSLSLQCLSRTQVLKEFLEEFVMGGFVNKKYLWYREFVNSSRPDEINYVGSIMFRNIHYIYFRLSFFSTVHQACMLAIQRCISPELGVVFKSTYNYWLVLKCKSCSLQNYCALKSCAFWVRSIIDRVLREVEKIPVVLHRTTSKAEERRQTALKQAMMYGRCRHIQNLCLVNLNAFLHF.

This sequence belongs to the adenoviridae E4 30 to 34 kDa protein family. As to quaternary structure, interacts with E1B-55k.

Its subcellular location is the host nucleus. It localises to the host cytoplasm. Its function is as follows. Plays a major role to prevent cellular inhibition of viral genome replication by nuclear bodies. Assembles an SCF-like E3 ubiquitin ligase complex based on the cellular proteins ELOB, ELOC, CUL5 and RBX1, in cooperation with viral E1B-55K. This viral RING-type ligase ubiquitinates cellular substrates prior to proteasomal degradation: p53/TP53, LIG4, MRE11-RAD50-NBS1 (MRN) complex, ITGA3, DAXX and BLM. The sequence is that of Early E4 31 kDa protein from Canis lupus familiaris (Dog).